The chain runs to 885 residues: Probable LRR receptor-like serine/threonine-protein kinase At1g51820 (885 aa).

The N-terminal stretch at 1-20 (MERHFVFIATYLLIFHLVQA) is a signal peptide. Residues 21–509 (QNQTGFISVD…GHKKKSVIVP (489 aa)) are Extracellular-facing. N-linked (GlcNAc...) asparagine glycosylation is found at N22, N93, N135, N194, N228, N250, N254, N281, N287, N424, N437, N456, and N461. LRR repeat units follow at residues 403–424 (IITS…AIKN), 427–447 (HLQI…EFLA), and 451–473 (SLLV…LLQK). A helical membrane pass occupies residues 510 to 530 (VVASIASIAVLIGALVLFLIL). Residues 531–885 (RKKRSPKVEG…FGTEVSPNAR (355 aa)) are Cytoplasmic-facing. Residues 578 to 851 (NNFQRILGKG…QVVIELNECL (274 aa)) form the Protein kinase domain. ATP is bound by residues 584–592 (LGKGGFGMV) and K606. The residue at position 651 (Y651) is a Phosphotyrosine. D703 (proton acceptor) is an active-site residue. S737 bears the Phosphoserine mark. Residues T738 and T743 each carry the phosphothreonine modification. The residue at position 751 (Y751) is a Phosphotyrosine.

Belongs to the protein kinase superfamily. Ser/Thr protein kinase family.

Its subcellular location is the membrane. It carries out the reaction L-seryl-[protein] + ATP = O-phospho-L-seryl-[protein] + ADP + H(+). The enzyme catalyses L-threonyl-[protein] + ATP = O-phospho-L-threonyl-[protein] + ADP + H(+). In Arabidopsis thaliana (Mouse-ear cress), this protein is Probable LRR receptor-like serine/threonine-protein kinase At1g51820.